Consider the following 318-residue polypeptide: NADH-ubiquinone oxidoreductase chain 1 (318 aa).

8 helical membrane passes run 2-22 (FLMN…FLTL), 68-88 (ISLF…MWIP), 102-122 (ILFI…SGWA), 146-166 (LAII…SSLI), 171-191 (FTWL…STLA), 217-237 (AGPF…MNAL), 253-273 (EMFT…FLWI), and 294-314 (LPLT…MACI).

It belongs to the complex I subunit 1 family.

Its subcellular location is the mitochondrion inner membrane. It catalyses the reaction a ubiquinone + NADH + 5 H(+)(in) = a ubiquinol + NAD(+) + 4 H(+)(out). Core subunit of the mitochondrial membrane respiratory chain NADH dehydrogenase (Complex I) that is believed to belong to the minimal assembly required for catalysis. Complex I functions in the transfer of electrons from NADH to the respiratory chain. The immediate electron acceptor for the enzyme is believed to be ubiquinone. This Tamias sibiricus (Siberian chipmunk) protein is NADH-ubiquinone oxidoreductase chain 1 (MT-ND1).